A 167-amino-acid polypeptide reads, in one-letter code: Thiol peroxidase (167 aa).

Positions 18 to 167 (VKVGDQAPDF…PIEAAKALVK (150 aa)) constitute a Thioredoxin domain. Cys-60 (cysteine sulfenic acid (-SOH) intermediate) is an active-site residue. A disulfide bridge links Cys-60 with Cys-94.

This sequence belongs to the peroxiredoxin family. Tpx subfamily. As to quaternary structure, homodimer.

It carries out the reaction a hydroperoxide + [thioredoxin]-dithiol = an alcohol + [thioredoxin]-disulfide + H2O. Its function is as follows. Thiol-specific peroxidase that catalyzes the reduction of hydrogen peroxide and organic hydroperoxides to water and alcohols, respectively. Plays a role in cell protection against oxidative stress by detoxifying peroxides. In Bacillus subtilis (strain 168), this protein is Thiol peroxidase.